Reading from the N-terminus, the 512-residue chain is Cytochrome P450 1A1 (512 aa).

The interval 29–40 (SRPRVPKGLKNP) is mitochondrial targeting signal. O-linked (GlcNAc) serine glycosylation is present at Ser-67. Phe-224 contacts substrate. Residue Cys-457 participates in heme binding.

The protein belongs to the cytochrome P450 family. In terms of assembly, interacts with cytosolic chaperones HSP70 and HSP90; this interaction is required for initial targeting to mitochondria. Interacts (via mitochondrial targeting signal) with TOMM40 (via N-terminus); this interaction is required for translocation across the mitochondrial outer membrane. Heme is required as a cofactor.

The protein localises to the endoplasmic reticulum membrane. It localises to the mitochondrion inner membrane. Its subcellular location is the microsome membrane. The protein resides in the cytoplasm. The enzyme catalyses an organic molecule + reduced [NADPH--hemoprotein reductase] + O2 = an alcohol + oxidized [NADPH--hemoprotein reductase] + H2O + H(+). It carries out the reaction estrone + reduced [NADPH--hemoprotein reductase] + O2 = 2-hydroxyestrone + oxidized [NADPH--hemoprotein reductase] + H2O + H(+). The catalysed reaction is estrone + reduced [NADPH--hemoprotein reductase] + O2 = 4-hydroxyestrone + oxidized [NADPH--hemoprotein reductase] + H2O + H(+). It catalyses the reaction estrone + reduced [NADPH--hemoprotein reductase] + O2 = 6alpha-hydroxyestrone + oxidized [NADPH--hemoprotein reductase] + H2O + H(+). The enzyme catalyses estrone + reduced [NADPH--hemoprotein reductase] + O2 = 15alpha-hydroxyestrone + oxidized [NADPH--hemoprotein reductase] + H2O + H(+). It carries out the reaction estrone + reduced [NADPH--hemoprotein reductase] + O2 = 16alpha-hydroxyestrone + oxidized [NADPH--hemoprotein reductase] + H2O + H(+). The catalysed reaction is 17beta-estradiol + reduced [NADPH--hemoprotein reductase] + O2 = 2-hydroxy-17beta-estradiol + oxidized [NADPH--hemoprotein reductase] + H2O + H(+). It catalyses the reaction 17beta-estradiol + reduced [NADPH--hemoprotein reductase] + O2 = 4-hydroxy-17beta-estradiol + oxidized [NADPH--hemoprotein reductase] + H2O + H(+). The enzyme catalyses 17beta-estradiol + reduced [NADPH--hemoprotein reductase] + O2 = 6alpha-hydroxy-17beta-estradiol + oxidized [NADPH--hemoprotein reductase] + H2O + H(+). It carries out the reaction 17beta-estradiol + reduced [NADPH--hemoprotein reductase] + O2 = 7alpha-hydroxy-17beta-estradiol + oxidized [NADPH--hemoprotein reductase] + H2O + H(+). The catalysed reaction is 17beta-estradiol + reduced [NADPH--hemoprotein reductase] + O2 = 15alpha-hydroxy-17beta-estradiol + oxidized [NADPH--hemoprotein reductase] + H2O + H(+). It catalyses the reaction (5Z,8Z,11Z)-eicosatrienoate + reduced [NADPH--hemoprotein reductase] + O2 = 19-hydroxy-(5Z,8Z,11Z)-eicosatrienoate + oxidized [NADPH--hemoprotein reductase] + H2O + H(+). The enzyme catalyses (5Z,8Z,11Z,14Z)-eicosatetraenoate + reduced [NADPH--hemoprotein reductase] + O2 = 16-hydroxy-(5Z,8Z,11Z,14Z)-eicosatetraenoate + oxidized [NADPH--hemoprotein reductase] + H2O + H(+). It carries out the reaction (5Z,8Z,11Z,14Z)-eicosatetraenoate + reduced [NADPH--hemoprotein reductase] + O2 = 17-hydroxy-(5Z,8Z,11Z,14Z)-eicosatetraenoate + oxidized [NADPH--hemoprotein reductase] + H2O + H(+). The catalysed reaction is (5Z,8Z,11Z,14Z)-eicosatetraenoate + reduced [NADPH--hemoprotein reductase] + O2 = 18-hydroxy-(5Z,8Z,11Z,14Z)-eicosatetraenoate + oxidized [NADPH--hemoprotein reductase] + H2O + H(+). It catalyses the reaction (5Z,8Z,11Z,14Z)-eicosatetraenoate + reduced [NADPH--hemoprotein reductase] + O2 = 19-hydroxy-(5Z,8Z,11Z,14Z)-eicosatetraenoate + oxidized [NADPH--hemoprotein reductase] + H2O + H(+). The enzyme catalyses (5Z,8Z,11Z,14Z,17Z)-eicosapentaenoate + reduced [NADPH--hemoprotein reductase] + O2 = 19-hydroxy-(5Z,8Z,11Z,14Z,17Z)-eicosapentaenoate + oxidized [NADPH--hemoprotein reductase] + H2O + H(+). It carries out the reaction (5Z,8Z,11Z,14Z)-eicosatetraenoate + reduced [NADPH--hemoprotein reductase] + O2 = (8R,9S)-epoxy-(5Z,11Z,14Z)-eicosatrienoate + oxidized [NADPH--hemoprotein reductase] + H2O + H(+). The catalysed reaction is (5Z,8Z,11Z,14Z)-eicosatetraenoate + reduced [NADPH--hemoprotein reductase] + O2 = (11R,12S)-epoxy-(5Z,8Z,14Z)-eicosatrienoate + oxidized [NADPH--hemoprotein reductase] + H2O + H(+). It catalyses the reaction (5Z,8Z,11Z,14Z)-eicosatetraenoate + reduced [NADPH--hemoprotein reductase] + O2 = (14S,15R)-epoxy-(5Z,8Z,11Z)-eicosatrienoate + oxidized [NADPH--hemoprotein reductase] + H2O + H(+). The enzyme catalyses (5Z,8Z,11Z,14Z)-eicosatetraenoate + reduced [NADPH--hemoprotein reductase] + O2 = (14R,15S)-epoxy-(5Z,8Z,11Z)-eicosatrienoate + oxidized [NADPH--hemoprotein reductase] + H2O + H(+). It carries out the reaction (5Z,8Z,11Z,14Z,17Z)-eicosapentaenoate + reduced [NADPH--hemoprotein reductase] + O2 = (17R,18S)-epoxy-(5Z,8Z,11Z,14Z)-eicosatetraenoate + oxidized [NADPH--hemoprotein reductase] + H2O + H(+). The catalysed reaction is (4Z,7Z,10Z,13Z,16Z,19Z)-docosahexaenoate + reduced [NADPH--hemoprotein reductase] + O2 = (19S,20R)-epoxy-(4Z,7Z,10Z,13Z,16Z)-docosapentaenoate + oxidized [NADPH--hemoprotein reductase] + H2O + H(+). It catalyses the reaction (4Z,7Z,10Z,13Z,16Z,19Z)-docosahexaenoate + reduced [NADPH--hemoprotein reductase] + O2 = (19R,20S)-epoxy-(4Z,7Z,10Z,13Z,16Z)-docosapentaenoate + oxidized [NADPH--hemoprotein reductase] + H2O + H(+). The enzyme catalyses all-trans-retinol + reduced [NADPH--hemoprotein reductase] + O2 = all-trans-retinal + oxidized [NADPH--hemoprotein reductase] + 2 H2O + H(+). It carries out the reaction all-trans-retinal + reduced [NADPH--hemoprotein reductase] + O2 = all-trans-retinoate + oxidized [NADPH--hemoprotein reductase] + H2O + 2 H(+). The catalysed reaction is (13S)-hydroperoxy-(9Z,11E)-octadecadienoate = 13-oxo-(9Z,11E)-octadecadienoate + H2O. It catalyses the reaction (12S)-hydroperoxy-(5Z,8Z,10E,14Z)-eicosatetraenoate = 12-oxo-(5Z,8Z,10E,14Z)-eicosatetraenoate + H2O. The enzyme catalyses (15S)-hydroperoxy-(5Z,8Z,11Z,13E)-eicosatetraenoate = 15-oxo-(5Z,8Z,11Z,13E)-eicosatetraenoate + H2O. It carries out the reaction (5S)-hydroperoxy-(6E,8Z,11Z,14Z)-eicosatetraenoate = 5-oxo-(6E,8Z,11Z,14Z)-eicosatetraenoate + H2O. It participates in steroid hormone biosynthesis. Its pathway is lipid metabolism; fatty acid metabolism. The protein operates within cofactor metabolism; retinol metabolism. In terms of biological role, a cytochrome P450 monooxygenase involved in the metabolism of various endogenous substrates, including fatty acids, steroid hormones and vitamins. Mechanistically, uses molecular oxygen inserting one oxygen atom into a substrate, and reducing the second into a water molecule, with two electrons provided by NADPH via cytochrome P450 reductase (CPR; NADPH-ferrihemoprotein reductase). Catalyzes the hydroxylation of carbon-hydrogen bonds. Exhibits high catalytic activity for the formation of hydroxyestrogens from estrone (E1) and 17beta-estradiol (E2), namely 2-hydroxy E1 and E2, as well as D-ring hydroxylated E1 and E2 at the C15alpha and C16alpha positions. Displays different regioselectivities for polyunsaturated fatty acids (PUFA) hydroxylation. Catalyzes the epoxidation of double bonds of certain PUFA. Converts arachidonic acid toward epoxyeicosatrienoic acid (EET) regioisomers, 8,9-, 11,12-, and 14,15-EET, that function as lipid mediators in the vascular system. Displays an absolute stereoselectivity in the epoxidation of eicosapentaenoic acid (EPA) producing the 17(R),18(S) enantiomer. May play an important role in all-trans retinoic acid biosynthesis in extrahepatic tissues. Catalyzes two successive oxidative transformation of all-trans retinol to all-trans retinal and then to the active form all-trans retinoic acid. May also participate in eicosanoids metabolism by converting hydroperoxide species into oxo metabolites (lipoxygenase-like reaction, NADPH-independent). This chain is Cytochrome P450 1A1 (CYP1A1), found in Macaca fascicularis (Crab-eating macaque).